The sequence spans 416 residues: Gamma-glutamyl phosphate reductase (416 aa).

The protein belongs to the gamma-glutamyl phosphate reductase family.

Its subcellular location is the cytoplasm. It catalyses the reaction L-glutamate 5-semialdehyde + phosphate + NADP(+) = L-glutamyl 5-phosphate + NADPH + H(+). Its pathway is amino-acid biosynthesis; L-proline biosynthesis; L-glutamate 5-semialdehyde from L-glutamate: step 2/2. Catalyzes the NADPH-dependent reduction of L-glutamate 5-phosphate into L-glutamate 5-semialdehyde and phosphate. The product spontaneously undergoes cyclization to form 1-pyrroline-5-carboxylate. This is Gamma-glutamyl phosphate reductase from Streptococcus pyogenes serotype M3 (strain ATCC BAA-595 / MGAS315).